We begin with the raw amino-acid sequence, 322 residues long: tRNA U34 carboxymethyltransferase (322 aa).

Carboxy-S-adenosyl-L-methionine-binding residues include Lys-91, Trp-105, Lys-110, Gly-129, Met-195, Tyr-199, and Arg-314.

It belongs to the class I-like SAM-binding methyltransferase superfamily. CmoB family. Homotetramer.

The enzyme catalyses carboxy-S-adenosyl-L-methionine + 5-hydroxyuridine(34) in tRNA = 5-carboxymethoxyuridine(34) in tRNA + S-adenosyl-L-homocysteine + H(+). Its function is as follows. Catalyzes carboxymethyl transfer from carboxy-S-adenosyl-L-methionine (Cx-SAM) to 5-hydroxyuridine (ho5U) to form 5-carboxymethoxyuridine (cmo5U) at position 34 in tRNAs. This chain is tRNA U34 carboxymethyltransferase, found in Ectopseudomonas mendocina (strain ymp) (Pseudomonas mendocina).